A 453-amino-acid chain; its full sequence is tRNA modification GTPase MnmE (453 aa).

Positions 22, 79, and 119 each coordinate (6S)-5-formyl-5,6,7,8-tetrahydrofolate. One can recognise a TrmE-type G domain in the interval 215-376 (GMKVVIAGRP…LREHLKACMG (162 aa)). Residue Asn225 coordinates K(+). GTP is bound by residues 225–230 (NAGKSS), 244–250 (TEIAGTT), 269–272 (DTAG), and 334–337 (NKAD). A Mg(2+)-binding site is contributed by Ser229. The K(+) site is built by Thr244, Ile246, and Thr249. Thr250 is a Mg(2+) binding site. Residue Lys453 participates in (6S)-5-formyl-5,6,7,8-tetrahydrofolate binding.

This sequence belongs to the TRAFAC class TrmE-Era-EngA-EngB-Septin-like GTPase superfamily. TrmE GTPase family. Homodimer. Heterotetramer of two MnmE and two MnmG subunits. K(+) is required as a cofactor.

Its subcellular location is the cytoplasm. Exhibits a very high intrinsic GTPase hydrolysis rate. Involved in the addition of a carboxymethylaminomethyl (cmnm) group at the wobble position (U34) of certain tRNAs, forming tRNA-cmnm(5)s(2)U34. The chain is tRNA modification GTPase MnmE from Aeromonas hydrophila subsp. hydrophila (strain ATCC 7966 / DSM 30187 / BCRC 13018 / CCUG 14551 / JCM 1027 / KCTC 2358 / NCIMB 9240 / NCTC 8049).